Consider the following 462-residue polypeptide: Kremen protein 2 (462 aa).

Residues 1-25 form the signal peptide; it reads MGTQALQGFLFLLFLPLLQPRGASA. At 26–364 the chain is on the extracellular side; it reads GSLHSPGLSE…SPRPGAPPAA (339 aa). Residues 35-119 enclose the Kringle domain; that stretch reads ECFQVNGADY…YWRYCDIPSC (85 aa). 3 cysteine pairs are disulfide-bonded: C36–C119, C60–C100, and C89–C114. N49 carries N-linked (GlcNAc...) asparagine glycosylation. The region spanning 121 to 215 is the WSC domain; the sequence is MPGYLGCFVD…DGRLGVYEVS (95 aa). A disulfide bridge connects residues C219 and C245. Residues 219 to 326 form the CUB domain; sequence CQGNWTAPQG…QGFALTYRGL (108 aa). N222, N244, and N351 each carry an N-linked (GlcNAc...) asparagine glycan. The tract at residues 328–352 is disordered; sequence DAAEDPEAPEGSAQTPAAPLDGANV. Residues 365 to 387 traverse the membrane as a helical segment; that stretch reads IGARVFSTVTAVSVLLLLLLGLL. The Cytoplasmic portion of the chain corresponds to 388–462; it reads RPLRRRSCLL…SSLRSLISAL (75 aa).

In terms of assembly, interacts with ERLEC1. Forms a ternary complex with DKK1 and LRP6.

The protein resides in the membrane. Functionally, receptor for Dickkopf proteins. Cooperates with DKK1/2 to inhibit Wnt/beta-catenin signaling by promoting the endocytosis of Wnt receptors LRP5 and LRP6. Plays a role in limb development; attenuates Wnt signaling in the developing limb to allow normal limb patterning and can also negatively regulate bone formation. This is Kremen protein 2 (KREMEN2) from Homo sapiens (Human).